Consider the following 815-residue polypeptide: Tubulin polyglutamylase TTLL13 (815 aa).

The 346-residue stretch at 85–430 folds into the TTL domain; it reads RRSLAINLTN…RGCDKRKVME (346 aa). ATP is bound by residues Lys202, 208-209, 230-233, and 243-245; these read QG, QQYI, and KFD. An a protein-binding site is contributed by Gln208. Position 269 (Arg269) interacts with L-glutamate. 291-292 is an ATP binding site; the sequence is TN. Residues Tyr293 and Lys311 each contribute to the L-glutamate site. The Mg(2+) site is built by Asp376, Glu389, and Asn391. Positions 401 to 482 are c-MTBD region; it reads CLDQEVKDAL…LGKYRRIYPG (82 aa). An L-glutamate-binding site is contributed by Lys407. Positions 504 to 528 form a coiled coil; the sequence is ASKAREECARQQLEEIRLKQEQQET. The interval 520–556 is disordered; the sequence is RLKQEQQETSGTKRQKARDQNQGESAGEKSRPRAGLQ. Residues 536–550 are compositionally biased toward basic and acidic residues; that stretch reads ARDQNQGESAGEKSR.

Belongs to the tubulin--tyrosine ligase family. It depends on Mg(2+) as a cofactor.

It catalyses the reaction (L-glutamyl)(n)-gamma-L-glutamyl-L-glutamyl-[protein] + L-glutamate + ATP = (L-glutamyl)(n+1)-gamma-L-glutamyl-L-glutamyl-[protein] + ADP + phosphate + H(+). Polyglutamylase which modifies tubulin, generating polyglutamate side chains of variable lengths on the gamma-carboxyl group of specific glutamate residues within the C-terminal tail of tubulin. Mediates ATP-dependent polyglutamate side-chain elongation of the polyglutamylation reaction but not the initiation step. Preferentially modifies the alpha-tubulin tail over a beta-tail. The polypeptide is Tubulin polyglutamylase TTLL13 (Homo sapiens (Human)).